We begin with the raw amino-acid sequence, 675 residues long: Alpha-1,4-glucan:maltose-1-phosphate maltosyltransferase 1 (675 aa).

Alpha-maltose 1-phosphate contacts are provided by K264, Q324, and D359. Catalysis depends on D394, which acts as the Nucleophile. N395 lines the alpha-maltose 1-phosphate pocket. E423 functions as the Proton donor in the catalytic mechanism. 534-535 lines the alpha-maltose 1-phosphate pocket; sequence KY.

Belongs to the glycosyl hydrolase 13 family. GlgE subfamily. Homodimer.

It catalyses the reaction alpha-maltose 1-phosphate + [(1-&gt;4)-alpha-D-glucosyl](n) = [(1-&gt;4)-alpha-D-glucosyl](n+2) + phosphate. With respect to regulation, is competitively inhibited by alpha-, beta- and gamma-cyclodextrins (cyclic maltooligosaccharides), unlike GlgE from M.tuberculosis. Maltosyltransferase that uses maltose 1-phosphate (M1P) as the sugar donor to elongate linear or branched alpha-(1-&gt;4)-glucans. Maltooligosaccharides with a degree of polymerization (DP) superior or equal to 4 are efficient acceptors, with DP6 being optimal in the GlgE-catalyzed polymerization with M1P. Is specific for the alpha-anomer of M1P as substrate, since the beta-anomer of M1P gives no activity. Alpha-D-glucose 1-phosphate cannot serve as a donor substrate, but alpha-maltosyl fluoride is an efficient donor in vitro. Exhibits an alpha-retaining catalytic mechanism, with evidence that maltooligosaccharide acceptors are extended at their non-reducing ends. Is also able to catalyze the reverse reaction in vitro, releasing M1P from glycogen or maltoheptaose in the presence of inorganic phosphate. Also catalyzes disproportionation reactions through maltosyl transfer between maltooligosaccharides. Is probably involved in a branched alpha-glucan biosynthetic pathway from trehalose, together with TreS, Mak and GlgB. The polypeptide is Alpha-1,4-glucan:maltose-1-phosphate maltosyltransferase 1 (glgE1) (Streptomyces coelicolor (strain ATCC BAA-471 / A3(2) / M145)).